Here is a 149-residue protein sequence, read N- to C-terminus: MDSVLTNKNPIIYPKRTRRYRTDQSSTDEFSSTNRIRDIKDPEHPELSLEDLNVLTEESVEVDDHKSYVRITFTPTLPHCHLPTHIGLCILVKLVQSLPARFKVDVRVAPGSHDKETTVNKQLGDKERVTAALENPELVALLNKMMQVC.

This sequence belongs to the MIP18 family.

May play a role in chromosome segregation through establishment of sister chromatid cohesion. Unable to complement ae7 mutants, and thus probably not involved in the cytosolic iron-sulfur assembly (CIA) pathway. In Arabidopsis thaliana (Mouse-ear cress), this protein is Protein AE7-like 2.